The sequence spans 1116 residues: ELKS/Rab6-interacting/CAST family member 1 (1116 aa).

The tract at residues 1–54 (MYGSARSVGKVEPSSQSPGRSPRLPRSPRLGHRRTNSTGGSSGSSVGGGSGKTL) is disordered. K10 carries the post-translational modification N6-acetyllysine. Positions 13–28 (PSSQSPGRSPRLPRSP) are enriched in low complexity. S17, S21, and S37 each carry phosphoserine. Phosphothreonine is present on T38. Over residues 40 to 51 (GSSGSSVGGGSG) the composition is skewed to gly residues. Residues S55, S75, and S94 each carry the phosphoserine modification. Positions 144–988 (RQARDNTIMD…RMKLMADNYE (845 aa)) form a coiled coil. Residues 590–602 (KEKQMSSLKERVK) show a composition bias toward basic and acidic residues. 2 disordered regions span residues 590 to 609 (KEKQ…ADTT) and 814 to 836 (ARRR…RKKD). S1005 carries the post-translational modification Phosphoserine. Phosphothreonine is present on T1046. The 63-residue stretch at 1046 to 1108 (TPPASYNLDD…DHCPDILEQV (63 aa)) folds into the FIP-RBD domain. The stretch at 1060–1100 (WENELQKMTRGQLQDELEKGERDNAELQEFANAILQQIADH) forms a coiled coil.

As to quaternary structure, part of a complex with CHUK, IKBKB and IKBKG. Interacts with CHUK, IKBKB and IKBKG. The interaction with IKBKG is independent of CHUK and IKBKB. Interacts with NFKBIA. Isoform 4 interacts with PPFIA1, and through its C-terminus with the PDZ domains of RIMS1 and RIMS2. Interacts with ERC2/CAST1. Interacts with the GTB-bound forms of RAB6A isoform 1 and isoform 2 and with RAB6B. The interaction was strongest with RAB6B, followed by RAB6A isoform 2 and weakest with RAB6A isoform 1. Interacts with SDCCAG8. Part of a cortical microtubule stabilization complex (CMSC) composed of KANK1, PPFIA1, PPFIBP1, ERC1/ELKS, PHLDB2/LL5beta, CLASPs, KIF21A and possibly additional interactors; within CMSCs KANK1 and PHLDB2/LL5beta appear to be the core components for targeting of microtubule-binding proteins KIF21A and CLASPs, whereas PPFIA1, PPFIBP1 and ERC1/ELKS serve as scaffolds for protein clustering. As to expression, widely expressed. Isoform 2 and isoform 4 are abundantly expressed in brain. Isoform 1 and isoform 3 are predominantly expressed in testis and thyroid, and isoform 1 predominates in other tissues tested.

It is found in the cytoplasm. Its subcellular location is the cytoskeleton. The protein resides in the microtubule organizing center. The protein localises to the centrosome. It localises to the membrane. It is found in the golgi apparatus membrane. Its subcellular location is the presynaptic cell membrane. The protein resides in the cell projection. The protein localises to the podosome. In terms of biological role, regulatory subunit of the IKK complex. Probably recruits IkappaBalpha/NFKBIA to the complex. May be involved in the organization of the cytomatrix at the nerve terminals active zone (CAZ) which regulates neurotransmitter release. May be involved in vesicle trafficking at the CAZ. May be involved in Rab-6 regulated endosomes to Golgi transport. This is ELKS/Rab6-interacting/CAST family member 1 (ERC1) from Homo sapiens (Human).